Here is a 98-residue protein sequence, read N- to C-terminus: Derivative of benzaldehyde biosynthesis cluster protein C (98 aa).

This sequence belongs to the YciI family.

The protein operates within secondary metabolite biosynthesis. Part of the gene cluster that mediates the biosynthesis of the antibiotic 2,4-dihydroxy-3-methyl-6-(2-oxopropyl)benzaldehyde (DHMBA) and its derivatives. The direct non-reducing polyketide synthase dbaI product is 2,4-dihydroxy-3-methyl-6-(2-oxopropyl)benzaldehyde (DHMBA), produced by condensation of one acetyl-CoA starter unit with 4 malonyl-CoA units and one methylation step. The FAD-dependent monooxygenase dbaH is responsible for the synthesis of yellow pigments derived from the oxidation of DHMBA. The roles of dbaB, C, E and F have still to be determined. This chain is Derivative of benzaldehyde biosynthesis cluster protein C, found in Emericella nidulans (strain FGSC A4 / ATCC 38163 / CBS 112.46 / NRRL 194 / M139) (Aspergillus nidulans).